We begin with the raw amino-acid sequence, 233 residues long: PEP2-like protein NECHADRAFT_97050 (233 aa).

This sequence belongs to the PEP2 family.

Its function is as follows. May contribute to the ability of the fungus to cause disease on pea plants. In Fusarium vanettenii (strain ATCC MYA-4622 / CBS 123669 / FGSC 9596 / NRRL 45880 / 77-13-4) (Fusarium solani subsp. pisi), this protein is PEP2-like protein NECHADRAFT_97050.